We begin with the raw amino-acid sequence, 739 residues long: Phosphoribosylformylglycinamidine synthase subunit PurL (739 aa).

The active site involves His54. Residues Tyr57 and Lys96 each coordinate ATP. Glu98 is a binding site for Mg(2+). Substrate is bound by residues Ser99–His102 and Arg121. Residue His100 is the Proton acceptor of the active site. Residue Asp122 participates in Mg(2+) binding. Gln245 lines the substrate pocket. Asp273 is a binding site for Mg(2+). Glu317–Gln319 is a binding site for substrate. Positions 500 and 537 each coordinate ATP. Asn538 serves as a coordination point for Mg(2+). Ser540 is a substrate binding site.

The protein belongs to the FGAMS family. As to quaternary structure, monomer. Part of the FGAM synthase complex composed of 1 PurL, 1 PurQ and 2 PurS subunits.

It is found in the cytoplasm. The enzyme catalyses N(2)-formyl-N(1)-(5-phospho-beta-D-ribosyl)glycinamide + L-glutamine + ATP + H2O = 2-formamido-N(1)-(5-O-phospho-beta-D-ribosyl)acetamidine + L-glutamate + ADP + phosphate + H(+). It participates in purine metabolism; IMP biosynthesis via de novo pathway; 5-amino-1-(5-phospho-D-ribosyl)imidazole from N(2)-formyl-N(1)-(5-phospho-D-ribosyl)glycinamide: step 1/2. In terms of biological role, part of the phosphoribosylformylglycinamidine synthase complex involved in the purines biosynthetic pathway. Catalyzes the ATP-dependent conversion of formylglycinamide ribonucleotide (FGAR) and glutamine to yield formylglycinamidine ribonucleotide (FGAM) and glutamate. The FGAM synthase complex is composed of three subunits. PurQ produces an ammonia molecule by converting glutamine to glutamate. PurL transfers the ammonia molecule to FGAR to form FGAM in an ATP-dependent manner. PurS interacts with PurQ and PurL and is thought to assist in the transfer of the ammonia molecule from PurQ to PurL. The polypeptide is Phosphoribosylformylglycinamidine synthase subunit PurL (Bacillus cereus (strain ZK / E33L)).